We begin with the raw amino-acid sequence, 275 residues long: 3-methyl-2-oxobutanoate hydroxymethyltransferase (275 aa).

The Mg(2+) site is built by Asp-55 and Asp-94. 3-methyl-2-oxobutanoate contacts are provided by residues 55–56 (DS), Asp-94, and Lys-123. Glu-125 serves as a coordination point for Mg(2+). Residue Glu-192 is the Proton acceptor of the active site.

This sequence belongs to the PanB family. As to quaternary structure, homodecamer; pentamer of dimers. Mg(2+) is required as a cofactor.

The protein resides in the cytoplasm. It catalyses the reaction 3-methyl-2-oxobutanoate + (6R)-5,10-methylene-5,6,7,8-tetrahydrofolate + H2O = 2-dehydropantoate + (6S)-5,6,7,8-tetrahydrofolate. Its pathway is cofactor biosynthesis; (R)-pantothenate biosynthesis; (R)-pantoate from 3-methyl-2-oxobutanoate: step 1/2. Catalyzes the reversible reaction in which hydroxymethyl group from 5,10-methylenetetrahydrofolate is transferred onto alpha-ketoisovalerate to form ketopantoate. The protein is 3-methyl-2-oxobutanoate hydroxymethyltransferase of Halorhodospira halophila (strain DSM 244 / SL1) (Ectothiorhodospira halophila (strain DSM 244 / SL1)).